Reading from the N-terminus, the 895-residue chain is uncharacterized protein (895 aa).

2 to 19 (NISVIGTGYVGLIQAVGL) lines the NAD(+) pocket. The active site involves C261. A DOD-type homing endonuclease domain is found at 468 to 614 (LIGYYLSEGW…LLILLQLLGI (147 aa)).

The protein belongs to the UDP-glucose/GDP-mannose dehydrogenase family. Post-translationally, this protein undergoes a protein self splicing that involves a post-translational excision of the intervening region (intein) followed by peptide ligation.

This is an uncharacterized protein from Methanocaldococcus jannaschii (strain ATCC 43067 / DSM 2661 / JAL-1 / JCM 10045 / NBRC 100440) (Methanococcus jannaschii).